The sequence spans 433 residues: CinA-like protein (433 aa).

Belongs to the CinA family.

The chain is CinA-like protein from Prochlorococcus marinus subsp. pastoris (strain CCMP1986 / NIES-2087 / MED4).